The primary structure comprises 506 residues: ATP synthase subunit alpha (506 aa).

170-177 (GDRQTGKT) is a binding site for ATP.

The protein belongs to the ATPase alpha/beta chains family. F-type ATPases have 2 components, CF(1) - the catalytic core - and CF(0) - the membrane proton channel. CF(1) has five subunits: alpha(3), beta(3), gamma(1), delta(1), epsilon(1). CF(0) has four main subunits: a(1), b(1), b'(1) and c(9-12).

It is found in the cellular thylakoid membrane. The enzyme catalyses ATP + H2O + 4 H(+)(in) = ADP + phosphate + 5 H(+)(out). Produces ATP from ADP in the presence of a proton gradient across the membrane. The alpha chain is a regulatory subunit. The sequence is that of ATP synthase subunit alpha from Synechococcus sp. (strain CC9902).